Reading from the N-terminus, the 1531-residue chain is La-related protein Larp4B (1531 aa).

Over residues His112 to Leu147 the composition is skewed to low complexity. Disordered stretches follow at residues His112–Thr148 and Gln239–Ile263. Residues Asn262–Ile351 enclose the HTH La-type RNA-binding domain. The region spanning Cys348–Lys423 is the RRM domain. Disordered stretches follow at residues Pro533–Asn605, Ala710–Ser736, Thr748–Gln768, Gln791–Gln1135, Asp1160–Leu1211, and Ala1251–Gln1285. A compositionally biased stretch (low complexity) spans Tyr565–Gly578. 2 stretches are compositionally biased toward low complexity: residues Gln754–Gln768 and Ser810–Ser826. Polar residues predominate over residues Ser860–Gly884. Residues Ala945–Thr959 show a composition bias toward low complexity. Residues His966–Asn975 are compositionally biased toward basic residues. Gly residues predominate over residues Asn983–Gly1004. Positions His1031–Gln1045 are enriched in low complexity. Over residues Thr1068–Asn1086 the composition is skewed to polar residues. Residues Ser1087 to Gln1115 show a composition bias toward low complexity. Ser1123 is subject to Phosphoserine. Gly residues predominate over residues Thr1164 to Lys1173. Residues Pro1183–Pro1200 show a composition bias toward polar residues. Over residues Lys1270 to Pro1280 the composition is skewed to basic and acidic residues. Phosphoserine occurs at positions 1370 and 1413. Disordered regions lie at residues Lys1393–His1418 and Gly1450–Ser1531. 2 stretches are compositionally biased toward polar residues: residues Ala1467–Val1477 and Gln1502–Asn1515.

Functionally, probable RNA binding protein. Negatively regulates myc at the protein level, via an unknown mechanism, and may therefore have a role in growth. Has no effect on myc mRNA levels. This chain is La-related protein Larp4B, found in Drosophila melanogaster (Fruit fly).